The following is a 60-amino-acid chain: Toxin S4C8 (60 aa).

Cystine bridges form between Cys3/Cys22, Cys17/Cys39, Cys41/Cys52, and Cys53/Cys58. An important for binding to L-type calcium channels region spans residues 41-48 (CPTAMWPY).

It belongs to the three-finger toxin family. Short-chain subfamily. L-type calcium blocker sub-subfamily. As to expression, expressed by the venom gland.

The protein localises to the secreted. This specific blocker of the L-type calcium channel (Cav1/CACNA1) is a smooth muscle relaxant and an inhibitor of cardiac contractions. This chain is Toxin S4C8, found in Dendroaspis jamesoni kaimosae (Eastern Jameson's mamba).